A 629-amino-acid chain; its full sequence is Iron-regulated surface determinant protein B (629 aa).

An N-terminal signal peptide occupies residues 1–40 (MNKQQKEFKSFYSIRKSSLGVASVAISTLLLLMSNGEAQA). The YSIRK-G/S signaling motif signature appears at 12–23 (YSIRKSSLGVAS). A disordered region spans residues 38 to 104 (AQAAEETGGT…VKPAAKSDNN (67 aa)). Residues 83–99 (KEVEAPTSETKEVKPAA) show a composition bias toward basic and acidic residues. NEAT domains lie at 128-253 (SAPN…KFKT) and 325-442 (KMTD…TKAN). 2 residues coordinate heme: M346 and Y424. Composition is skewed to basic and acidic residues over residues 443–460 (ADKT…KKET) and 473–518 (VEKE…KGEV). The segment at 443–605 (ADKTNKKEQQ…QTGEESNKDM (163 aa)) is disordered. Residues 519-532 (ESSSTTPTKVVSTT) are compositionally biased toward low complexity. Polar residues-rich tracts occupy residues 533–556 (QNAA…SAGS) and 569–599 (NIKN…QTGE). The LPXTG sorting signal motif lies at 594 to 598 (LPQTG). Residue T597 is modified to Pentaglycyl murein peptidoglycan amidated threonine. Positions 598 to 629 (GEESNKDMTLPLMSLLALSSIIAFVLPRKRKN) are cleaved as a propeptide — removed by sortase A.

Belongs to the IsdB family. In terms of assembly, interacts with host HBA; this interaction allows heme extraction as iron source. Interacts with IsdA.

It is found in the secreted. Its subcellular location is the cell wall. Its function is as follows. Cell wall-anchored surface receptor that extracts heme from oxidized metHb to enable growth on hemoglobin as a sole iron source. Rapidly extracts heme from hemoglobin and transfers it to IsdA or IsdC, which then relays it to the membrane transporter/IsdEF for internalization. Also promotes resistance to hydrogen peroxide and killing by neutrophils. The sequence is that of Iron-regulated surface determinant protein B (isdB) from Staphylococcus aureus (strain bovine RF122 / ET3-1).